The chain runs to 159 residues: uncharacterized protein (159 aa).

A disordered region spans residues 9–36 (VTSGNKEKKKKRSSAGLTGHAPPAADSS).

This is an uncharacterized protein from Caenorhabditis elegans.